A 123-amino-acid chain; its full sequence is Large ribosomal subunit protein bL21 (123 aa).

This sequence belongs to the bacterial ribosomal protein bL21 family. As to quaternary structure, part of the 50S ribosomal subunit. Contacts protein L20.

Its function is as follows. This protein binds to 23S rRNA in the presence of protein L20. The chain is Large ribosomal subunit protein bL21 from Sinorhizobium fredii (strain NBRC 101917 / NGR234).